The primary structure comprises 182 residues: Protein GrpE (182 aa).

The span at methionine 1–glutamate 17 shows a compositional bias: basic and acidic residues. The disordered stretch occupies residues methionine 1–valine 33.

The protein belongs to the GrpE family. In terms of assembly, homodimer.

Its subcellular location is the cytoplasm. Functionally, participates actively in the response to hyperosmotic and heat shock by preventing the aggregation of stress-denatured proteins, in association with DnaK and GrpE. It is the nucleotide exchange factor for DnaK and may function as a thermosensor. Unfolded proteins bind initially to DnaJ; upon interaction with the DnaJ-bound protein, DnaK hydrolyzes its bound ATP, resulting in the formation of a stable complex. GrpE releases ADP from DnaK; ATP binding to DnaK triggers the release of the substrate protein, thus completing the reaction cycle. Several rounds of ATP-dependent interactions between DnaJ, DnaK and GrpE are required for fully efficient folding. The polypeptide is Protein GrpE (Borrelia hermsii (strain HS1 / DAH)).